A 160-amino-acid chain; its full sequence is Lipoprotein signal peptidase (160 aa).

Helical transmembrane passes span 60–80 and 84–104; these read TEWL…AFFL and LPFL…AGTI. Catalysis depends on residues Asp-118 and Asp-132. A helical transmembrane segment spans residues 127-147; it reads TFNMADSCLTLGIIWLVLLYL.

This sequence belongs to the peptidase A8 family.

The protein localises to the cell membrane. It catalyses the reaction Release of signal peptides from bacterial membrane prolipoproteins. Hydrolyzes -Xaa-Yaa-Zaa-|-(S,diacylglyceryl)Cys-, in which Xaa is hydrophobic (preferably Leu), and Yaa (Ala or Ser) and Zaa (Gly or Ala) have small, neutral side chains.. The protein operates within protein modification; lipoprotein biosynthesis (signal peptide cleavage). This protein specifically catalyzes the removal of signal peptides from prolipoproteins. In Dehalococcoides mccartyi (strain ATCC BAA-2266 / KCTC 15142 / 195) (Dehalococcoides ethenogenes (strain 195)), this protein is Lipoprotein signal peptidase.